The sequence spans 1499 residues: Streptococcal surface protein B (1499 aa).

An N-terminal signal peptide occupies residues 1-37 (MQKREVFGFRKSKVAKTLCGAVLGAALIAIADQQVLA). The segment at 50–84 (AVTTTGNPATNLPEAQGEATEAASQSQAQAGSKDG) is disordered. 4 Ag I/II A repeats span residues 145 to 219 (KKTT…QKAN), 220 to 301 (EDSQ…KKAK), 302 to 383 (EDND…KQAN), and 384 to 465 (ATNE…KKDF). Disordered regions lie at residues 689-709 (YADS…SEWD), 763-907 (TAPT…TPPV), and 1409-1472 (RTTT…TGTN). Positions 694 to 705 (NAEKSRGARWDT) are enriched in basic and acidic residues. Over residues 789–799 (PTPPVKTPDQP) the composition is skewed to pro residues. Over residues 800 to 815 (EPSKPEEPTYETEKPL) the composition is skewed to basic and acidic residues. The span at 828 to 838 (PTPPVKIPDQP) shows a compositional bias: pro residues. Residues 839–854 (EPSKPEEPTYETEKPL) are compositionally biased toward basic and acidic residues. Pro residues-rich tracts occupy residues 867–877 (PTPPVKTPDQP) and 888–907 (DPLP…TPPV). The span at 1428–1450 (KPKDPDKPETPKEPKVPSPKVED) shows a compositional bias: basic and acidic residues. The LPXTG sorting signal signature appears at 1466–1470 (LPKTG). Threonine 1469 bears the Pentaglycyl murein peptidoglycan amidated threonine mark. Positions 1470-1499 (GTNDATYMPYLGLAALVGFLGLGLAKRKED) are cleaved as a propeptide — removed by sortase.

It belongs to the antigen I/II family.

It is found in the secreted. The protein resides in the cell wall. It localises to the cell surface. Adhesin that mediates binding of bacteria to a variety of host cells. Plays a role in the bacterial invasion of dentinal tubules. A host immunostimulatory component, it modulates the innate immunity response. Plays a protective role against some antibiotics and cationic antimicrobial peptides (histatin-5, HTN3, but not beta-defensin 4A, DEFB4A). This chain is Streptococcal surface protein B, found in Streptococcus gordonii (strain Challis / ATCC 35105 / BCRC 15272 / CH1 / DL1 / V288).